The sequence spans 603 residues: ADP-ribosylation factor-binding protein GGA2 (603 aa).

The interval 1–22 is disordered; it reads MAATAVAAGTGSPAGTESAEGG. Positions 13–22 are enriched in low complexity; the sequence is PAGTESAEGG. Residues 36–166 form the VHS domain; that stretch reads ATDPSMAEQD…MLKKQGIIKQ (131 aa). Residues 190–317 form the GAT domain; that stretch reads DEEKSKLLTR…GVRLYKQVVE (128 aa). A unstructured hinge region spans residues 318–473; it reads GRVSAGNAVP…VFVPLESVKP (156 aa). A GAE domain is found at 474 to 595; it reads SSLPPIVVYD…SEVGEVKDFP (122 aa).

It belongs to the GGA protein family. Monomer. Interacts with NECAP1, TSG101, UBC and AFTPH/aftiphilin. Interacts with CNST. Interacts with GGA1 and GGA3. Binds to clathrin and activated ARFs, such as ARF1, ARF5 and ARF6. Binds RABEP1 and RABGEF1. Interacts with the type-I membrane proteins LRP3, M6PR/CD-MPR, IGF2R/CI-MPR and BACE1. Interacts (via N-terminal VHS domain) with SORL1/sorLA and SORT1 (via C-terminal cytosolic domain). Binds the accessory proteins CCDC91, P200, SYNRG, EPN4 and NECAP2. Interacts with ADRA2B. Interacts (via VHS domain) with PIK4B; the interaction is important for PIK4B location at the Golgi apparatus membrane. Ubiquitinated.

It localises to the golgi apparatus. It is found in the trans-Golgi network membrane. The protein resides in the endosome membrane. Its subcellular location is the early endosome membrane. Functionally, plays a role in protein sorting and trafficking between the trans-Golgi network (TGN) and endosomes. Mediates the ARF-dependent recruitment of clathrin to the TGN and binds ubiquitinated proteins and membrane cargo molecules with a cytosolic acidic cluster-dileucine (DXXLL) motif. Mediates export of the GPCR receptor ADRA2B to the cell surface. Regulates retrograde transport of phosphorylated form of BACE1 from endosomes to the trans-Golgi network. In Mus musculus (Mouse), this protein is ADP-ribosylation factor-binding protein GGA2 (Gga2).